The primary structure comprises 101 residues: uncharacterized protein (101 aa).

The N-terminal stretch at 1-21 (MKLSTCCAALLLALASPAVLA) is a signal peptide. The span at 79–94 (RTTSGNVSAPAQSSQD) shows a compositional bias: polar residues. The interval 79–101 (RTTSGNVSAPAQSSQDGAPAEPQ) is disordered.

This is an uncharacterized protein from Escherichia coli (strain K12).